A 108-amino-acid polypeptide reads, in one-letter code: MIMTTTPSIEGKKIERYCGIVVGEAVMGANVFRDIFAAIRDVVGGRSGAYEDELTNARQIGFRELEAEARSMGANAVVGIDIDYEVVGKGGSMLMVSISGTAVSCSDL.

The protein belongs to the UPF0145 family.

The polypeptide is UPF0145 protein Patl_2194 (Pseudoalteromonas atlantica (strain T6c / ATCC BAA-1087)).